A 169-amino-acid chain; its full sequence is Translationally-controlled tumor protein homolog (169 aa).

The TCTP domain occupies 1 to 169 (MLIYKDILTG…WKHGLEEMKV (169 aa)).

The protein belongs to the TCTP family.

Its subcellular location is the cytoplasm. It is found in the cytoskeleton. In terms of biological role, involved in protein synthesis. Involved in microtubule stabilization. This chain is Translationally-controlled tumor protein homolog, found in Alternaria alternata (Alternaria rot fungus).